Consider the following 84-residue polypeptide: Small ribosomal subunit protein uS17 (84 aa).

It belongs to the universal ribosomal protein uS17 family. Part of the 30S ribosomal subunit.

One of the primary rRNA binding proteins, it binds specifically to the 5'-end of 16S ribosomal RNA. In Hamiltonella defensa subsp. Acyrthosiphon pisum (strain 5AT), this protein is Small ribosomal subunit protein uS17.